The sequence spans 236 residues: 2-C-methyl-D-erythritol 4-phosphate cytidylyltransferase (236 aa).

The protein belongs to the IspD/TarI cytidylyltransferase family. IspD subfamily.

It carries out the reaction 2-C-methyl-D-erythritol 4-phosphate + CTP + H(+) = 4-CDP-2-C-methyl-D-erythritol + diphosphate. Its pathway is isoprenoid biosynthesis; isopentenyl diphosphate biosynthesis via DXP pathway; isopentenyl diphosphate from 1-deoxy-D-xylulose 5-phosphate: step 2/6. Functionally, catalyzes the formation of 4-diphosphocytidyl-2-C-methyl-D-erythritol from CTP and 2-C-methyl-D-erythritol 4-phosphate (MEP). The sequence is that of 2-C-methyl-D-erythritol 4-phosphate cytidylyltransferase from Symbiobacterium thermophilum (strain DSM 24528 / JCM 14929 / IAM 14863 / T).